We begin with the raw amino-acid sequence, 396 residues long: Elongation factor Tu 2 (396 aa).

A tr-type G domain is found at 10-206 (KPHCNIGTIG…AVDAYIPQPE (197 aa)). Residues 19–26 (GHVDHGKT) form a G1 region. 19–26 (GHVDHGKT) lines the GTP pocket. Residue T26 participates in Mg(2+) binding. Residues 60-64 (GITIS) are G2. The G3 stretch occupies residues 81–84 (DCPG). Residues 81–85 (DCPGH) and 136–139 (NKCD) each bind GTP. The interval 136–139 (NKCD) is G4. A G5 region spans residues 174–176 (SAL).

The protein belongs to the TRAFAC class translation factor GTPase superfamily. Classic translation factor GTPase family. EF-Tu/EF-1A subfamily. As to quaternary structure, monomer.

It localises to the cytoplasm. The catalysed reaction is GTP + H2O = GDP + phosphate + H(+). GTP hydrolase that promotes the GTP-dependent binding of aminoacyl-tRNA to the A-site of ribosomes during protein biosynthesis. This Rhodopseudomonas palustris (strain BisB5) protein is Elongation factor Tu 2.